The sequence spans 310 residues: MEIASQEDPIPINTSYGNSGGGHGNMNHHHHANSAPSSLNITTSNPLLVSSNSNGLGKNHDHSHHHHVGYNIMVTNIKKEKPVVIKYKECLKNHAATMGGNAIDGCGEFMPSGEEGSIEALTCSVCNCHRNFHRRETEGEEKTFFSPYLNHHQPPPQQRKLMFHHKMIKSPLPQQMIMPIGVTTAGSNSESEDLMEEEGGGSLTFRQPPPPPSPYSYGHNQKKRFRTKFTQEQKEKMISFAERVGWKIQRQEESVVQQLCQEIGIRRRVLKVWMHNNKQNLSKKSNNVSNNVDLSAGNNDITENLASTNP.

A disordered region spans residues 1–64 (MEIASQEDPI…GLGKNHDHSH (64 aa)). The span at 39 to 56 (LNITTSNPLLVSSNSNGL) shows a compositional bias: polar residues. A ZF-HD dimerization-type; degenerate zinc finger spans residues 87–136 (YKECLKNHAATMGGNAIDGCGEFMPSGEEGSIEALTCSVCNCHRNFHRRE). Disordered stretches follow at residues 184 to 220 (TAGS…YGHN) and 281 to 310 (LSKK…STNP). Residues 190 to 199 (ESEDLMEEEG) show a composition bias toward acidic residues. The homeobox DNA-binding region spans 222 to 285 (KKRFRTKFTQ…NNKQNLSKKS (64 aa)). The span at 281-291 (LSKKSNNVSNN) shows a compositional bias: low complexity. Positions 292 to 310 (VDLSAGNNDITENLASTNP) are enriched in polar residues.

In terms of assembly, homo- and heterodimer with other ZFHD proteins. Interacts with MIF2 and MIF3; these interactions prevent nuclear localization and DNA-binding to inhibit transcription regulation activity. Binds to ZHD1, ZHD2 and ZHD11. Interacts with HIPP30. Interacts with KIN10, KIN11 and FLZ8. In terms of tissue distribution, mostly expressed in flowers and inflorescence.

The protein localises to the nucleus. Putative transcription factor. The protein is Zinc-finger homeodomain protein 3 (ZHD3) of Arabidopsis thaliana (Mouse-ear cress).